Here is a 201-residue protein sequence, read N- to C-terminus: MAKVQVNNVVVLDNPSPFYNPFQFEITFECIEDLSEDLEWKIIYVGSAESEEYDQVLDSVLVGPVPAGRHMFVFQADAPNPGLIPDADAVGVTVVLITCTYRGQEFIRVGYYVNNEYTETELRENPPVKPDFSKLQRNILASNPRVTRFHINWEENTEKLDDSNPHMHPVLSIEARPSASKGWPMSENSLNVMLESHMDCM.

Belongs to the ASF1 family. In terms of assembly, interacts with histone H3 (including both histone H3.1 and H3.3) and histone H4. Interacts with hira and p60.

The protein resides in the nucleus. Functionally, histone chaperone that facilitates histone deposition and histone exchange and removal during nucleosome assembly and disassembly. Not critical for histone deposition during nucleosome assembly. The polypeptide is Histone chaperone asf1a-A (asf1aa) (Xenopus laevis (African clawed frog)).